The primary structure comprises 271 residues: 4-hydroxy-tetrahydrodipicolinate reductase (271 aa).

NAD(+)-binding positions include 10 to 15, Glu36, 100 to 102, and 124 to 127; these read GAGGRM, GTT, and SGNM. The active-site Proton donor/acceptor is His157. His158 is a binding site for (S)-2,3,4,5-tetrahydrodipicolinate. The active-site Proton donor is Lys161. 167–168 provides a ligand contact to (S)-2,3,4,5-tetrahydrodipicolinate; sequence GT.

This sequence belongs to the DapB family.

Its subcellular location is the cytoplasm. The catalysed reaction is (S)-2,3,4,5-tetrahydrodipicolinate + NAD(+) + H2O = (2S,4S)-4-hydroxy-2,3,4,5-tetrahydrodipicolinate + NADH + H(+). The enzyme catalyses (S)-2,3,4,5-tetrahydrodipicolinate + NADP(+) + H2O = (2S,4S)-4-hydroxy-2,3,4,5-tetrahydrodipicolinate + NADPH + H(+). It participates in amino-acid biosynthesis; L-lysine biosynthesis via DAP pathway; (S)-tetrahydrodipicolinate from L-aspartate: step 4/4. In terms of biological role, catalyzes the conversion of 4-hydroxy-tetrahydrodipicolinate (HTPA) to tetrahydrodipicolinate. This Rhodopseudomonas palustris (strain ATCC BAA-98 / CGA009) protein is 4-hydroxy-tetrahydrodipicolinate reductase.